The primary structure comprises 197 residues: Protein shisa-4 (197 aa).

The N-terminal stretch at 1–27 (MPPAGLRRAAPLTAIALLVLGAPLVLA) is a signal peptide. At 28 to 87 (GEDCLWYLDRNGSWHPGFNCEFFTFCCGTCYHRYCCRDLTLLITERQQKHCLAFSPKTIA) the chain is on the extracellular side. The helical transmembrane segment at 88–108 (GIASAVILFVAVVATTICCFL) threads the bilayer. The Cytoplasmic segment spans residues 109-197 (CSCCYLYRRR…MPPQPSYPGA (89 aa)).

Belongs to the shisa family.

Its subcellular location is the membrane. The sequence is that of Protein shisa-4 (SHISA4) from Homo sapiens (Human).